The chain runs to 1059 residues: IQ motif-containing protein H (1059 aa).

Residues 6–35 (KNKDEVGNILVKVQDDLRQLKKNIVQFTVQ) adopt a coiled-coil conformation. The disordered stretch occupies residues 245 to 267 (MESAESRLLRAPPPSAASASSDN). One can recognise an IQ domain in the interval 401-430 (HQAAAVRIQTCWRRYSARTAYLIRLRSKWA).

This is IQ motif-containing protein H (iqch) from Danio rerio (Zebrafish).